The sequence spans 237 residues: Ribosomal RNA small subunit methyltransferase G (237 aa).

Residues Gly78, Phe83, 129-130, and Arg148 contribute to the S-adenosyl-L-methionine site; that span reads AE.

It belongs to the methyltransferase superfamily. RNA methyltransferase RsmG family.

Its subcellular location is the cytoplasm. Its function is as follows. Specifically methylates the N7 position of a guanine in 16S rRNA. In Streptococcus pyogenes serotype M4 (strain MGAS10750), this protein is Ribosomal RNA small subunit methyltransferase G.